Here is a 248-residue protein sequence, read N- to C-terminus: mRNA-decapping protein OPG122 (248 aa).

The 183-residue stretch at 45–227 folds into the Nudix hydrolase domain; it reads HKRVSVSAIL…IAKYALDTAK (183 aa). The Nudix box signature appears at 125–147; sequence GGIPKRGENVPECLSREIKEEVN.

The protein belongs to the Nudix hydrolase family. In terms of assembly, interacts with the late transcription elongation factor VLTF-4/OPG110. Interacts with the late transcription factors VLTF-1. The cofactor is Mg(2+). It depends on Mn(2+) as a cofactor.

It is found in the host mitochondrion. In terms of biological role, acts with RNA polymerase to initiate transcription from late gene promoters. This is mRNA-decapping protein OPG122 (OPG122) from Cynomys gunnisoni (Gunnison's prairie dog).